Consider the following 822-residue polypeptide: MSGWRKIYYKLLNLPLKLLVKSKVIPADPVVELGLDPSRPILYVLPYNSQADLLTLRAKCLALGLPDPSQSFEFNGVELPSHVFINDGPRVFRYYVPKQKSVKLFHDYLDLHRANPDLDVQMVPVSVMFGRSPGREGHSQATPHLRLLNGIEKFFAVLWLGRDSFVRFSSPVSLRYMATEHGTDKTIAHKLARVARMHFSRQRLAAVGPRLPVRQELFNKLLDSKAIKKAVDDEARSKKISHEKAQQNAIALMEEIAADFSYEAVRLSDRVLSWTWNRLYQGINVHNAERVRQLAQDGHGIVYVPCHRSHMDYLLLSYVLYHQGLVPPHIAAGINLNFWPAGPIFRRLGAFFIRRTFKGNKLYSTIFREYLGELFARGYSVEYFMEGGRSRTGRLLEPKTGTLAMTIQAMLRGGTRPITLVPIYVGYEHVMEVGTYAKELRGAVKEKEGFMQMVRGLRKLRNLGQGYVNFGEPLPLTTYLNQHVPQWRDAIDPIEAQRPSWLTPTVQDISMDIMVRINNSAAANAMNLCSTALLASRQRSLTREQMQEQLDCYLQLLRQVPYHKDITVPKKTADELLEHALSMNKFEVEKDSIGDIIILPREQAVLMTYYRNNIQHLLVLPSLIASIVIHHRRITLAEVVRQIALIYPLLQSELFLHYSKEQLPGVLETLANELVQQQLLCSRDGELAINPPRIRTLQLLSAGVRETLQRYAITLSLLCANPEINRGTLEKESRNMAQRLSVLHGINAPEFFDKAVFSTLVATLRTEGYITDSAEAAQGDIVAIYNILGDLITPEVRLTIESASSSAEMEAESQAVEETTQE.

Residues 306 to 311 carry the HXXXXD motif motif; sequence CHRSHM. Residues 803 to 822 are disordered; the sequence is ASSSAEMEAESQAVEETTQE.

It belongs to the GPAT/DAPAT family.

The protein localises to the cell inner membrane. It carries out the reaction sn-glycerol 3-phosphate + an acyl-CoA = a 1-acyl-sn-glycero-3-phosphate + CoA. It participates in phospholipid metabolism; CDP-diacylglycerol biosynthesis; CDP-diacylglycerol from sn-glycerol 3-phosphate: step 1/3. This is Glycerol-3-phosphate acyltransferase from Pectobacterium carotovorum subsp. carotovorum (strain PC1).